A 39-amino-acid polypeptide reads, in one-letter code: Photosystem II reaction center protein Y (39 aa).

The chain crosses the membrane as a helical span at residues 5–23; the sequence is VLIVLTPLLIAGGWAVFNI.

This sequence belongs to the PsbY family. In terms of assembly, PSII is composed of 1 copy each of membrane proteins PsbA, PsbB, PsbC, PsbD, PsbE, PsbF, PsbH, PsbI, PsbJ, PsbK, PsbL, PsbM, PsbT, PsbX, PsbY, PsbZ, Psb30/Ycf12, peripheral proteins PsbO, CyanoQ (PsbQ), PsbU, PsbV and a large number of cofactors. It forms dimeric complexes.

It is found in the cellular thylakoid membrane. Functionally, loosely associated component of the core of photosystem II (PSII), it is not always seen in crystals. PSII is a light-driven water plastoquinone oxidoreductase, using light energy to abstract electrons from H(2)O, generating a proton gradient subsequently used for ATP formation. This chain is Photosystem II reaction center protein Y, found in Microcystis aeruginosa (strain NIES-843 / IAM M-2473).